The primary structure comprises 252 residues: Phosphate import ATP-binding protein PstB (252 aa).

In terms of domain architecture, ABC transporter spans 6-247 (ISAENLNLFY…PKDQRTEDYI (242 aa)). Residue 38-45 (GPSGCGKS) coordinates ATP.

This sequence belongs to the ABC transporter superfamily. Phosphate importer (TC 3.A.1.7) family. In terms of assembly, the complex is composed of two ATP-binding proteins (PstB), two transmembrane proteins (PstC and PstA) and a solute-binding protein (PstS).

It is found in the cell membrane. It carries out the reaction phosphate(out) + ATP + H2O = ADP + 2 phosphate(in) + H(+). Functionally, part of the ABC transporter complex PstSACB involved in phosphate import. Responsible for energy coupling to the transport system. The protein is Phosphate import ATP-binding protein PstB of Heliobacterium mobile (Heliobacillus mobilis).